Here is a 274-residue protein sequence, read N- to C-terminus: Large ribosomal subunit protein uL2 (274 aa).

Positions 223–256 are disordered; it reads VVMNPVDHPHGGGEGKTGEGRHPVDPWGNLTKGY. The segment covering 229-246 has biased composition (basic and acidic residues); sequence DHPHGGGEGKTGEGRHPV.

The protein belongs to the universal ribosomal protein uL2 family. Part of the 50S ribosomal subunit. Forms a bridge to the 30S subunit in the 70S ribosome.

Functionally, one of the primary rRNA binding proteins. Required for association of the 30S and 50S subunits to form the 70S ribosome, for tRNA binding and peptide bond formation. It has been suggested to have peptidyltransferase activity; this is somewhat controversial. Makes several contacts with the 16S rRNA in the 70S ribosome. The chain is Large ribosomal subunit protein uL2 from Albidiferax ferrireducens (strain ATCC BAA-621 / DSM 15236 / T118) (Rhodoferax ferrireducens).